The sequence spans 147 residues: Ribosome maturation factor RimP (147 aa).

This sequence belongs to the RimP family.

It localises to the cytoplasm. Functionally, required for maturation of 30S ribosomal subunits. In Sulfurihydrogenibium sp. (strain YO3AOP1), this protein is Ribosome maturation factor RimP.